We begin with the raw amino-acid sequence, 419 residues long: Octopressin receptor (419 aa).

At 1–37 (MENFTEENLHPWITTTTRVYNNVTIFPQYDDELGKFE) the chain is on the extracellular side. N-linked (GlcNAc...) asparagine glycans are attached at residues Asn-3 and Asn-22. A helical membrane pass occupies residues 38 to 58 (IMVLCILCFMALFGNAVVLIV). Residues 59–80 (LRIKKTTLTRMQLLIVYLSVTD) lie on the Cytoplasmic side of the membrane. A helical membrane pass occupies residues 81–101 (ISVALFHILPTIILKINVYFL). The Extracellular portion of the chain corresponds to 102–108 (GDISACR). Cys-107 and Cys-182 are joined by a disulfide. The chain crosses the membrane as a helical span at residues 109–129 (VYQFITVAELYASSFVLIVTA). At 130–153 (LDRYISICHPLAAHMWTNRRVHMT) the chain is on the cytoplasmic side. A helical membrane pass occupies residues 154–174 (TALALFLALMCSLPQLDAVLV). Residues 175-192 (DFHGGKLCRPNLTTELAN) are Extracellular-facing. Residue Asn-185 is glycosylated (N-linked (GlcNAc...) asparagine). The chain crosses the membrane as a helical span at residues 193–213 (IAYSWWAFCSVFFVPLLLLIF). The Cytoplasmic portion of the chain corresponds to 214–292 (FYGRICFVVW…VSKSKIKTIK (79 aa)). Residues 253-274 (SQTSSENRVKNYSDARDKDSSR) are disordered. The segment covering 259 to 274 (NRVKNYSDARDKDSSR) has biased composition (basic and acidic residues). Residues 293–313 (LTFSVVACFIICYTPFFTVLM) traverse the membrane as a helical segment. The Extracellular portion of the chain corresponds to 314–329 (ARTYDAELSSAQTPAL). Residues 330–350 (VILSLLPSLNSCTNPWIYLAF) form a helical membrane-spanning segment. The Cytoplasmic portion of the chain corresponds to 351–419 (SGKVWCRQQS…TTALMSSSPC (69 aa)).

This sequence belongs to the G-protein coupled receptor 1 family. Vasopressin/oxytocin receptor subfamily. In terms of tissue distribution, present in the nervous system and peripheral tissues.

The protein localises to the cell membrane. Its function is as follows. Acts as a receptor for octopressin. The sequence is that of Octopressin receptor from Octopus vulgaris (Common octopus).